Here is a 130-residue protein sequence, read N- to C-terminus: Holo-[acyl-carrier-protein] synthase (130 aa).

2 residues coordinate Mg(2+): D9 and E58.

Belongs to the P-Pant transferase superfamily. AcpS family. The cofactor is Mg(2+).

The protein localises to the cytoplasm. It catalyses the reaction apo-[ACP] + CoA = holo-[ACP] + adenosine 3',5'-bisphosphate + H(+). Transfers the 4'-phosphopantetheine moiety from coenzyme A to a Ser of acyl-carrier-protein. This chain is Holo-[acyl-carrier-protein] synthase, found in Mycolicibacterium smegmatis (strain ATCC 700084 / mc(2)155) (Mycobacterium smegmatis).